We begin with the raw amino-acid sequence, 683 residues long: MDAMIGDPMSATSVEAVFEKQPSPEFRELVTPRAMAVAVVLSVVICFVGMRIQMTAGIVPALNMPASILSFFLLKWLIRLLQSCGFPMLPFTRQENMFLLTCIITCLNLALTSGFATNIIGMTSTVARSLADDPDPRDIMDHVPIGKWIVYLFLVGMTGVLINVPFNQVMIIDYKLLFPTGTVIAQLINSFHTPEGAYVAKMQVATIFKVFFGSFSWSMFQWFYTAGDDCGFQHFPTFGLGLYKHRFYFDFSATYIGLGMICPHIVNFGLFFGAIISWGFLYPFLETKRGQWYQTDSPTSLNGQNGYKVFISVTLIITDGMINFLTLITTASINFYQLRKEHDLGLANYFKKHPSLNYDDRKRIEVFLANRIPIPVPVAAYITCAAISTIAIPAMFNQIKFYHLAVLYMVIPVVTFCNTYATGLTDWSVAPTYAKFTTFVFAAWIAKPGAVVASLLASGVIVAALHISSQAMQDLKSGHMTLTSPRAMVTGQIFGVAVGSILCPCVFLAFQSTTKPNAPVGSKQSDYPCPFAGLYRAIGVIGTGGVKELPKHCMTFCVVAFCVTVIIDAVVLVSQKRGWSIHRYIPSMTVIALPFFAGSYFTIDMCVGSLLLLAWTRMNAKSAEMLSSAVAAGLICGEGLFTLPSALLNMFKVQPPMCMKFLSGGEEVEAADSFLNNLGTSRT.

Transmembrane regions (helical) follow at residues 29–49 (LVTP…CFVG), 58–78 (IVPA…KWLI), 97–117 (MFLL…GFAT), 142–162 (HVPI…GVLI), 204–224 (VATI…QWFY), 265–285 (IVNF…YPFL), 309–329 (VFIS…TLIT), 372–392 (IPIP…TIAI), 404–424 (LAVL…ATGL), 448–468 (PGAV…LHIS), 490–510 (TGQI…FLAF), 553–573 (CMTF…VVLV), 595–615 (FFAG…LLAW), and 628–648 (SAVA…SALL).

The protein belongs to the YSL (TC 2.A.67.2) family.

It is found in the membrane. May be involved in the transport of nicotianamine-chelated metals. The polypeptide is Probable metal-nicotianamine transporter YSL3 (YSL3) (Oryza sativa subsp. japonica (Rice)).